Consider the following 584-residue polypeptide: Aspartate--tRNA(Asp/Asn) ligase (584 aa).

Residue glutamate 173 participates in L-aspartate binding. The segment at 197–200 is aspartate; sequence QLFK. Arginine 219 is an L-aspartate binding site. ATP contacts are provided by residues 219 to 221 and glutamine 228; that span reads RDE. Histidine 447 contacts L-aspartate. Glutamate 477 lines the ATP pocket. Arginine 484 is an L-aspartate binding site. 529–532 provides a ligand contact to ATP; sequence GFDR.

Belongs to the class-II aminoacyl-tRNA synthetase family. Type 1 subfamily. In terms of assembly, homodimer.

The protein localises to the cytoplasm. The catalysed reaction is tRNA(Asx) + L-aspartate + ATP = L-aspartyl-tRNA(Asx) + AMP + diphosphate. Functionally, aspartyl-tRNA synthetase with relaxed tRNA specificity since it is able to aspartylate not only its cognate tRNA(Asp) but also tRNA(Asn). Reaction proceeds in two steps: L-aspartate is first activated by ATP to form Asp-AMP and then transferred to the acceptor end of tRNA(Asp/Asn). The protein is Aspartate--tRNA(Asp/Asn) ligase of Campylobacter hominis (strain ATCC BAA-381 / DSM 21671 / CCUG 45161 / LMG 19568 / NCTC 13146 / CH001A).